Here is a 287-residue protein sequence, read N- to C-terminus: 4,4'-diapophytoene synthase (287 aa).

(2E,6E)-farnesyl diphosphate-binding positions include H18–S21, Y41, and R45. Mg(2+) contacts are provided by D48 and D52. Q165 is a (2E,6E)-farnesyl diphosphate binding site. Position 168 (N168) interacts with Mg(2+). R171 serves as a coordination point for (2E,6E)-farnesyl diphosphate. D172 contacts Mg(2+). Position 248 (Y248) interacts with (2E,6E)-farnesyl diphosphate.

This sequence belongs to the phytoene/squalene synthase family. CrtM subfamily. It depends on Mg(2+) as a cofactor.

The enzyme catalyses 2 (2E,6E)-farnesyl diphosphate = 15-cis-4,4'-diapophytoene + 2 diphosphate. It participates in carotenoid biosynthesis; staphyloxanthin biosynthesis; staphyloxanthin from farnesyl diphosphate: step 1/5. In terms of biological role, involved in the biosynthesis of the yellow-orange carotenoid staphyloxanthin, which plays a role in the virulence via its protective function against oxidative stress. Catalyzes the head-to-head condensation of two molecules of farnesyl diphosphate (FPP) into the colorless C(30) carotenoid 4,4'-diapophytoene (dehydrosqualene). The sequence is that of 4,4'-diapophytoene synthase from Staphylococcus aureus.